We begin with the raw amino-acid sequence, 291 residues long: Flavonol synthase/flavanone 3-hydroxylase (291 aa).

The Fe2OG dioxygenase domain occupies 151–250; it reads CWYVMNINHY…RMSWPVLVSP (100 aa). Residues histidine 175, aspartate 177, and histidine 231 each contribute to the Fe cation site.

It belongs to the iron/ascorbate-dependent oxidoreductase family. Requires L-ascorbate as cofactor. The cofactor is Fe cation.

The protein localises to the cytoplasm. The enzyme catalyses a (2R,3R)-dihydroflavonol + 2-oxoglutarate + O2 = a flavonol + succinate + CO2 + H2O. It carries out the reaction a (2S)-flavan-4-one + 2-oxoglutarate + O2 = a (2R,3R)-dihydroflavonol + succinate + CO2. It participates in secondary metabolite biosynthesis; flavonoid biosynthesis. Its function is as follows. Catalyzes the formation of flavonols from dihydroflavonols. It can act on dihydrokaempferol to produce kaempferol, on dihydroquercetin to produce quercitin and on dihydromyricetin to produce myricetin. This Matthiola incana (Common stock) protein is Flavonol synthase/flavanone 3-hydroxylase.